The sequence spans 221 residues: Lipoprotein-releasing system ATP-binding protein LolD (221 aa).

An ABC transporter domain is found at 8–220; sequence LKMISKHYKQ…YNLKHGLLNI (213 aa). ATP is bound at residue 42 to 49; the sequence is GSSGSGKS.

The protein belongs to the ABC transporter superfamily. Lipoprotein translocase (TC 3.A.1.125) family. As to quaternary structure, the complex is composed of two ATP-binding proteins (LolD) and two transmembrane proteins (LolC and LolE).

Its subcellular location is the cell inner membrane. Its function is as follows. Part of the ABC transporter complex LolCDE involved in the translocation of mature outer membrane-directed lipoproteins, from the inner membrane to the periplasmic chaperone, LolA. Responsible for the formation of the LolA-lipoprotein complex in an ATP-dependent manner. The polypeptide is Lipoprotein-releasing system ATP-binding protein LolD (Rickettsia prowazekii (strain Madrid E)).